Here is a 404-residue protein sequence, read N- to C-terminus: Tryptophan synthase beta chain (404 aa).

Lys-90 carries the N6-(pyridoxal phosphate)lysine modification.

Belongs to the TrpB family. Tetramer of two alpha and two beta chains. It depends on pyridoxal 5'-phosphate as a cofactor.

It catalyses the reaction (1S,2R)-1-C-(indol-3-yl)glycerol 3-phosphate + L-serine = D-glyceraldehyde 3-phosphate + L-tryptophan + H2O. The protein operates within amino-acid biosynthesis; L-tryptophan biosynthesis; L-tryptophan from chorismate: step 5/5. Its function is as follows. The beta subunit is responsible for the synthesis of L-tryptophan from indole and L-serine. This chain is Tryptophan synthase beta chain, found in Geobacillus thermodenitrificans (strain NG80-2).